The following is a 375-amino-acid chain: Putative fimbrium tip subunit Fim1C (375 aa).

Residues 1–16 (MKLLANIFLSGLAILA) form the signal peptide. The N-palmitoyl cysteine moiety is linked to residue Cys17. Cys17 carries the S-diacylglycerol cysteine lipid modification. The propeptide occupies 17–47 (CVSCSKDEDPVLPLEGAKLSVAVKASGTATK).

It belongs to the bacteroidetes fimbrillin superfamily. FimA/Mfa1 family. May be part of the fimbrial tip.

Its subcellular location is the fimbrium. The protein resides in the cell outer membrane. Its function is as follows. Probably a component of the fimbrium tip. Fimbriae are filamentous appendages on the cell surface that mediate cell adhesion and biofilm formation. In Parabacteroides distasonis (strain ATCC 8503 / DSM 20701 / CIP 104284 / JCM 5825 / NCTC 11152), this protein is Putative fimbrium tip subunit Fim1C.